The sequence spans 1389 residues: DNA-directed RNA polymerase subunit beta (1389 aa).

The protein belongs to the RNA polymerase beta chain family. As to quaternary structure, in plastids the minimal PEP RNA polymerase catalytic core is composed of four subunits: alpha, beta, beta', and beta''. When a (nuclear-encoded) sigma factor is associated with the core the holoenzyme is formed, which can initiate transcription.

Its subcellular location is the plastid. The protein localises to the chloroplast. The enzyme catalyses RNA(n) + a ribonucleoside 5'-triphosphate = RNA(n+1) + diphosphate. In terms of biological role, DNA-dependent RNA polymerase catalyzes the transcription of DNA into RNA using the four ribonucleoside triphosphates as substrates. The polypeptide is DNA-directed RNA polymerase subunit beta (Phaeodactylum tricornutum (strain CCAP 1055/1)).